The chain runs to 230 residues: uncharacterized protein (230 aa).

This is an uncharacterized protein from Dictyostelium discoideum (Social amoeba).